Consider the following 842-residue polypeptide: Elongation factor G, mitochondrial (842 aa).

The transit peptide at 1-58 directs the protein to the mitochondrion; sequence MVAIPRVAAARSLARQLARQSLRTTSFASAPVRIAIASTPLARSPSSFRSLSSSTRRS. In terms of domain architecture, tr-type G spans 93–398; that stretch reads VRQRNVGISA…GVCSYLPNPA (306 aa). Residues 102-109, 196-200, and 250-253 each bind GTP; these read AHIDSGKT, DTPGH, and NKMD. The tract at residues 423-442 is disordered; it reads AGEDQEAAAEARKNAAPPVL.

It belongs to the TRAFAC class translation factor GTPase superfamily. Classic translation factor GTPase family. EF-G/EF-2 subfamily.

It localises to the mitochondrion. It participates in protein biosynthesis; polypeptide chain elongation. Its function is as follows. Mitochondrial GTPase that catalyzes the GTP-dependent ribosomal translocation step during translation elongation. During this step, the ribosome changes from the pre-translocational (PRE) to the post-translocational (POST) state as the newly formed A-site-bound peptidyl-tRNA and P-site-bound deacylated tRNA move to the P and E sites, respectively. Catalyzes the coordinated movement of the two tRNA molecules, the mRNA and conformational changes in the ribosome. The chain is Elongation factor G, mitochondrial from Mycosarcoma maydis (Corn smut fungus).